We begin with the raw amino-acid sequence, 428 residues long: GTPase Obg (428 aa).

Residues 1–158 (MFIDQVKIYV…RDVILELKVL (158 aa)) form the Obg domain. The OBG-type G domain maps to 159–329 (ADVGLVGFPS…LLFEVANLIE (171 aa)). GTP-binding positions include 165 to 172 (GFPSVGKS), 190 to 194 (FTTIV), 212 to 215 (DLPG), 282 to 285 (NKMD), and 310 to 312 (SAV). 2 residues coordinate Mg(2+): Ser-172 and Thr-192. One can recognise an OCT domain in the interval 350–428 (KFETEGVKFD…ILEYEFEFID (79 aa)).

The protein belongs to the TRAFAC class OBG-HflX-like GTPase superfamily. OBG GTPase family. In terms of assembly, monomer. Requires Mg(2+) as cofactor.

It localises to the cytoplasm. Its function is as follows. An essential GTPase which binds GTP, GDP and possibly (p)ppGpp with moderate affinity, with high nucleotide exchange rates and a fairly low GTP hydrolysis rate. Plays a role in control of the cell cycle, stress response, ribosome biogenesis and in those bacteria that undergo differentiation, in morphogenesis control. The polypeptide is GTPase Obg (Bacillus anthracis).